A 535-amino-acid chain; its full sequence is T-complex protein 1 subunit epsilon (535 aa).

The protein belongs to the TCP-1 chaperonin family. In terms of assembly, heterooligomeric complex of about 850 to 900 kDa that forms two stacked rings, 12 to 16 nm in diameter.

The protein localises to the cytoplasm. Its function is as follows. Molecular chaperone; assists the folding of proteins upon ATP hydrolysis. Known to play a role, in vitro, in the folding of actin and tubulin. This is T-complex protein 1 subunit epsilon from Arabidopsis thaliana (Mouse-ear cress).